A 490-amino-acid chain; its full sequence is Chromosomal replication initiator protein DnaA (490 aa).

The segment at 1–91 is domain I, interacts with DnaA modulators; the sequence is MTMKGGVASQ…GELWAAHDAT (91 aa). The domain II stretch occupies residues 91–147; sequence TGRRIDLKSRLEFEAAAGAYVEATPKAVAAEPIEIVLPVSTDAPTVVAPSAKSPRTQ. The interval 148–370 is domain III, AAA+ region; it reads GLQERFTFET…GALNTLSARA (223 aa). The ATP site is built by G192, G194, K195, and T196. The segment at 371–490 is domain IV, binds dsDNA; the sequence is GEGLSRMTLD…LETLTRKLRG (120 aa).

This sequence belongs to the DnaA family. In terms of assembly, oligomerizes as a right-handed, spiral filament on DNA at oriC.

The protein localises to the cytoplasm. Plays an essential role in the initiation and regulation of chromosomal replication. ATP-DnaA binds to the origin of replication (oriC) to initiate formation of the DNA replication initiation complex once per cell cycle. Binds the DnaA box (a 9 base pair repeat at the origin) and separates the double-stranded (ds)DNA. Forms a right-handed helical filament on oriC DNA; dsDNA binds to the exterior of the filament while single-stranded (ss)DNA is stabiized in the filament's interior. The ATP-DnaA-oriC complex binds and stabilizes one strand of the AT-rich DNA unwinding element (DUE), permitting loading of DNA polymerase. After initiation quickly degrades to an ADP-DnaA complex that is not apt for DNA replication. Binds acidic phospholipids. This chain is Chromosomal replication initiator protein DnaA, found in Caulobacter vibrioides (strain ATCC 19089 / CIP 103742 / CB 15) (Caulobacter crescentus).